A 272-amino-acid polypeptide reads, in one-letter code: NADPH-dependent 7-cyano-7-deazaguanine reductase (272 aa).

A substrate-binding site is contributed by 82–84; that stretch reads IES. 84-85 provides a ligand contact to NADPH; it reads SK. Cysteine 178 (thioimide intermediate) is an active-site residue. The Proton donor role is filled by aspartate 185. 217-218 serves as a coordination point for substrate; it reads HE. An NADPH-binding site is contributed by 246–247; the sequence is RG.

Belongs to the GTP cyclohydrolase I family. QueF type 2 subfamily. As to quaternary structure, homodimer.

Its subcellular location is the cytoplasm. It catalyses the reaction 7-aminomethyl-7-carbaguanine + 2 NADP(+) = 7-cyano-7-deazaguanine + 2 NADPH + 3 H(+). It participates in tRNA modification; tRNA-queuosine biosynthesis. In terms of biological role, catalyzes the NADPH-dependent reduction of 7-cyano-7-deazaguanine (preQ0) to 7-aminomethyl-7-deazaguanine (preQ1). This chain is NADPH-dependent 7-cyano-7-deazaguanine reductase, found in Stenotrophomonas maltophilia (strain R551-3).